The following is a 122-amino-acid chain: Large ribosomal subunit protein uL14c (122 aa).

This sequence belongs to the universal ribosomal protein uL14 family. As to quaternary structure, part of the 50S ribosomal subunit.

The protein resides in the plastid. Its subcellular location is the chloroplast. In terms of biological role, binds to 23S rRNA. The polypeptide is Large ribosomal subunit protein uL14c (Populus trichocarpa (Western balsam poplar)).